The sequence spans 279 residues: HTH-type transcriptional regulator HdfR (279 aa).

An HTH lysR-type domain is found at 1-58; sequence MDTELLKTFLEVSRTRHFGRAAESLYLTQSAVSFRIRQLENQLGVNLFTRHRNNIRLT. A DNA-binding region (H-T-H motif) is located at residues 18–37; that stretch reads FGRAAESLYLTQSAVSFRIR.

This sequence belongs to the LysR transcriptional regulatory family.

In terms of biological role, negatively regulates the transcription of the flagellar master operon flhDC by binding to the upstream region of the operon. In Escherichia coli O6:K15:H31 (strain 536 / UPEC), this protein is HTH-type transcriptional regulator HdfR.